The primary structure comprises 465 residues: Antithrombin-III (465 aa).

Residues 1-32 (MISNGIGTVTAGKRSICLLPLLLIGLWGCVTC) form the signal peptide. Intrachain disulfides connect Cys41-Cys161 and Cys54-Cys128. Thr64 carries the post-translational modification Phosphothreonine. Phosphoserine is present on Ser69. Trp82 serves as a coordination point for heparin. An N-linked (GlcNAc...) asparagine glycan is attached at Asn129. Arg162 is a binding site for heparin. An N-linked (GlcNAc...) asparagine glycan is attached at Asn168. A heparin-binding site is contributed by Arg178. Residues Asn188 and Asn225 are each glycosylated (N-linked (GlcNAc...) asparagine). A disulfide bond links Cys280 and Cys463.

Belongs to the serpin family. Forms protease inhibiting heterodimer with TMPRSS7. In terms of processing, phosphorylated by FAM20C in the extracellular medium. In terms of tissue distribution, plasma.

The protein resides in the secreted. It is found in the extracellular space. In terms of biological role, most important serine protease inhibitor in plasma that regulates the blood coagulation cascade. AT-III inhibits thrombin, matriptase-3/TMPRSS7, as well as factors IXa, Xa and XIa. Its inhibitory activity is greatly enhanced in the presence of heparin. The chain is Antithrombin-III (SERPINC1) from Bos taurus (Bovine).